A 523-amino-acid polypeptide reads, in one-letter code: Nitrogenase molybdenum-iron protein beta chain (523 aa).

[8Fe-7S] cluster-binding residues include Cys70, Cys95, Cys153, and Ser188.

The protein belongs to the NifD/NifK/NifE/NifN family. In terms of assembly, tetramer of two alpha and two beta chains. Forms complex with the iron protein (nitrogenase component 2). [8Fe-7S] cluster serves as cofactor.

It catalyses the reaction N2 + 8 reduced [2Fe-2S]-[ferredoxin] + 16 ATP + 16 H2O = H2 + 8 oxidized [2Fe-2S]-[ferredoxin] + 2 NH4(+) + 16 ADP + 16 phosphate + 6 H(+). Its activity is regulated as follows. Nitrogenase holoenzyme is subject to 'conformational protection' by FeSII; under oxidizing conditions FeSII binds to the holoenzyme and reversibly protects it from oxidation. This molybdenum-iron protein is part of the nitrogenase complex that catalyzes the key enzymatic reactions in nitrogen fixation. The sequence is that of Nitrogenase molybdenum-iron protein beta chain (nifK) from Azotobacter vinelandii.